We begin with the raw amino-acid sequence, 399 residues long: Subtilisin-like protease 1 (399 aa).

The first 19 residues, 1 to 19 (MGVFRFISISLAAVSAANA), serve as a signal peptide directing secretion. Positions 20 to 116 (AQILSMPHAQ…VEPDTIISVH (97 aa)) are excised as a propeptide. The region spanning 34–115 (SYIVMMKDDT…FVEPDTIISV (82 aa)) is the Inhibitor I9 domain. Residues 126–399 (SWGLARISNP…TNVLINNGGA (274 aa)) enclose the Peptidase S8 domain. Residues D158 and H190 each act as charge relay system in the active site. Residues 175–198 (GSNQVNDGDDRDGSGHGTHTSGTM) are disordered. N-linked (GlcNAc...) asparagine glycosylation occurs at N251. Positions 282-294 (NDNQDAQSSSPAS) are enriched in polar residues. The disordered stretch occupies residues 282 to 312 (NDNQDAQSSSPASEPSVCTVGSSAEDDSRSS). S345 (charge relay system) is an active-site residue.

It belongs to the peptidase S8 family.

The protein localises to the secreted. Its function is as follows. Secreted subtilisin-like serine protease with keratinolytic activity that contributes to pathogenicity. This is Subtilisin-like protease 1 (SUB1) from Arthroderma benhamiae (Trichophyton mentagrophytes).